We begin with the raw amino-acid sequence, 851 residues long: Molybdenum cofactor sulfurase (851 aa).

Lys-249 bears the N6-(pyridoxal phosphate)lysine mark. The active site involves Cys-413. The region spanning 665-844 (QYLRKFVMPG…LMVGDIVTPS (180 aa)) is the MOSC domain.

This sequence belongs to the class-V pyridoxal-phosphate-dependent aminotransferase family. MOCOS subfamily. Pyridoxal 5'-phosphate serves as cofactor.

The catalysed reaction is Mo-molybdopterin + L-cysteine + AH2 = thio-Mo-molybdopterin + L-alanine + A + H2O. It functions in the pathway cofactor biosynthesis; molybdopterin biosynthesis. Functionally, sulfurates the molybdenum cofactor. Sulfation of molybdenum is essential for xanthine dehydrogenase (XDH) and aldehyde oxidase (ADO) enzymes in which molybdenum cofactor is liganded by 1 oxygen and 1 sulfur atom in active form. In Neosartorya fischeri (strain ATCC 1020 / DSM 3700 / CBS 544.65 / FGSC A1164 / JCM 1740 / NRRL 181 / WB 181) (Aspergillus fischerianus), this protein is Molybdenum cofactor sulfurase.